A 387-amino-acid chain; its full sequence is Arrestin-C (387 aa).

This sequence belongs to the arrestin family. Retina and pineal gland.

In terms of biological role, may play a role in an as yet undefined retina-specific signal transduction. Could bind to photoactivated-phosphorylated red/green opsins. This Xenopus laevis (African clawed frog) protein is Arrestin-C (arr3).